A 538-amino-acid chain; its full sequence is UPF0761 membrane protein PsycPRwf_0630 (538 aa).

Transmembrane regions (helical) follow at residues 43–63 (LLSI…VPAL), 100–120 (LTAI…TTIE), 143–163 (WTII…SSAV), 183–203 (WVQV…YWFI), 215–235 (IAGV…GIIM), and 247–267 (AFAA…LILL). The segment at 427–538 (SVFSAQDADA…IITEDDNPNK (112 aa)) is disordered. Over residues 482–493 (PPDADIKAAAAK) the composition is skewed to low complexity. Positions 503-514 (KHTETAKQEHKK) are enriched in basic and acidic residues.

This sequence belongs to the UPF0761 family.

It localises to the cell inner membrane. The sequence is that of UPF0761 membrane protein PsycPRwf_0630 from Psychrobacter sp. (strain PRwf-1).